A 56-amino-acid polypeptide reads, in one-letter code: Large ribosomal subunit protein bL33 (56 aa).

It belongs to the bacterial ribosomal protein bL33 family.

The protein is Large ribosomal subunit protein bL33 of Dichelobacter nodosus (strain VCS1703A).